A 530-amino-acid polypeptide reads, in one-letter code: 3-oxo-5-alpha-steroid 4-dehydrogenase (530 aa).

Position 33–62 (33–62) interacts with FAD; it reads DVVVVGWGGAGASAAIEAREQGAEVLVIER. Residues 395–415 traverse the membrane as a helical segment; the sequence is AWQCLFGGLWAFQSMPALALM.

This sequence belongs to the FAD-dependent oxidoreductase 2 family. FAD serves as cofactor.

Its subcellular location is the membrane. It carries out the reaction a 3-oxo-5alpha-steroid + A = a 3-oxo-Delta(4)-steroid + AH2. It catalyses the reaction 5alpha-androstan-3,17-dione + A = androst-4-ene-3,17-dione + AH2. The enzyme catalyses 5alpha-androst-1-ene-3,17-dione + A = androsta-1,4-diene-3,17-dione + AH2. Its activity is regulated as follows. Inhibition occurs with substrate concentrations above 25 uM. Its function is as follows. Involved in the degradation of steroids having an A:B ring fusion in a trans configuration. Catalyzes the elimination of hydrogens located at positions 4 and 5 and the introduction of double bonds into ring A. This is 3-oxo-5-alpha-steroid 4-dehydrogenase from Comamonas testosteroni (Pseudomonas testosteroni).